The sequence spans 450 residues: Paired box protein Pax-8 (450 aa).

Positions Gly9 to Lys135 form a DNA-binding region, paired. Residues Gly12–Thr68 form a PAI subdomain region. The tract at residues Lys87–Lys135 is RED subdomain. Positions Leu159–Ile182 are enriched in polar residues. A disordered region spans residues Leu159–His222. Ser303 carries the phosphoserine modification.

As to quaternary structure, interacts with WWTR1. In terms of tissue distribution, expressed in the excretory system, thyroid gland and Wilms tumors.

The protein localises to the nucleus. Transcription factor for the thyroid-specific expression of the genes exclusively expressed in the thyroid cell type, maintaining the functional differentiation of such cells. This Homo sapiens (Human) protein is Paired box protein Pax-8 (PAX8).